We begin with the raw amino-acid sequence, 157 residues long: Beta-defensin 125 (157 aa).

An N-terminal signal peptide occupies residues 1-20 (MNLLMLTFIICGLLTQVTKG). 3 cysteine pairs are disulfide-bonded: C27/C55, C35/C49, and C39/C56. Positions 109-157 (GETITPETNTPETTMPPSETTSSKTTMPPSETATSETMPPPSQTALTHN) are disordered. Over residues 110 to 140 (ETITPETNTPETTMPPSETTSSKTTMPPSET) the composition is skewed to low complexity. Positions 141 to 157 (ATSETMPPPSQTALTHN) are enriched in polar residues.

This sequence belongs to the beta-defensin family.

Its subcellular location is the secreted. Functionally, has antibacterial activity. The polypeptide is Beta-defensin 125 (DEFB125) (Pongo pygmaeus (Bornean orangutan)).